Here is a 304-residue protein sequence, read N- to C-terminus: Protease HtpX homolog (304 aa).

2 helical membrane passes run 14 to 34 and 39 to 59; these read VFIILGFFIFVLMVGAAIGII and YLNGLILAAVIGAFYILIMVM. His144 serves as a coordination point for Zn(2+). Glu145 is an active-site residue. His148 contacts Zn(2+). Transmembrane regions (helical) follow at residues 159–179 and 202–222; these read IAIALVAVIAILSDIAMRMIF and AIIYIVALIFVILAPIIATAI. Zn(2+) is bound at residue Glu231.

The protein belongs to the peptidase M48B family. Requires Zn(2+) as cofactor.

It localises to the cell membrane. This Listeria monocytogenes serotype 4a (strain HCC23) protein is Protease HtpX homolog.